We begin with the raw amino-acid sequence, 494 residues long: Beta-glucosidase 29 (494 aa).

The first 28 residues, 1 to 28 (MAWLGIGMGRQIVPVLVFVAVLCSGVDA), serve as a signal peptide directing secretion. Residue Q49 coordinates a beta-D-glucoside. An N-linked (GlcNAc...) asparagine glycan is attached at N103. Residues H138 and 183-184 (NE) each bind a beta-D-glucoside. Residue E184 is the Proton donor of the active site. Residues C203 and C211 are joined by a disulfide bond. N-linked (GlcNAc...) asparagine glycosylation occurs at N263. Y327 lines the a beta-D-glucoside pocket. N-linked (GlcNAc...) asparagine glycosylation occurs at N352. E398 is a binding site for a beta-D-glucoside. The active-site Nucleophile is E398. N406 is a glycosylation site (N-linked (GlcNAc...) asparagine). A beta-D-glucoside-binding positions include W447, 454–455 (EW), and F463.

It belongs to the glycosyl hydrolase 1 family.

It catalyses the reaction Hydrolysis of terminal, non-reducing beta-D-glucosyl residues with release of beta-D-glucose.. This Oryza sativa subsp. japonica (Rice) protein is Beta-glucosidase 29 (BGLU29).